The following is a 524-amino-acid chain: Peptide chain release factor 3 (524 aa).

A tr-type G domain is found at 9–275 (QRRRTFAIIS…AVVELSPPPL (267 aa)). Residues 18–25 (SHPDAGKT), 86–90 (DTPGH), and 140–143 (NKLD) each bind GTP.

The protein belongs to the TRAFAC class translation factor GTPase superfamily. Classic translation factor GTPase family. PrfC subfamily.

The protein resides in the cytoplasm. Functionally, increases the formation of ribosomal termination complexes and stimulates activities of RF-1 and RF-2. It binds guanine nucleotides and has strong preference for UGA stop codons. It may interact directly with the ribosome. The stimulation of RF-1 and RF-2 is significantly reduced by GTP and GDP, but not by GMP. This is Peptide chain release factor 3 from Methylobacillus flagellatus (strain ATCC 51484 / DSM 6875 / VKM B-1610 / KT).